The chain runs to 492 residues: Solute carrier family 2, facilitated glucose transporter member 1 (492 aa).

Position 1 is an N-acetylmethionine (Met1). The Cytoplasmic portion of the chain corresponds to 1–11 (MEPSSKKVTGR). The helical transmembrane segment at 12 to 33 (LMLAVGGAVLGSLQFGYNTGVI) threads the bilayer. Topologically, residues 34-66 (NAPQKVIEEFYNQTWIHRYGERILPTTLTTLWS) are extracellular. N-linked (GlcNAc...) asparagine glycosylation is present at Asn45. Residues 67–87 (LSVAIFSVGGMIGSFSVGLFV) traverse the membrane as a helical segment. The Cytoplasmic segment spans residues 88–90 (NRF). A helical transmembrane segment spans residues 91–112 (GRRNSMLMMNLLAFVSAVLMGF). The Extracellular segment spans residues 113-120 (SKLAKSFE). Residues 121–144 (MLILGRFIIGVYCGLTTGFVPMYV) form a helical membrane-spanning segment. The Cytoplasmic portion of the chain corresponds to 145–155 (GEVSPTALRGA). The helical transmembrane segment at 156-176 (LGTLHQLGIVVGILIAQVFGL) threads the bilayer. D-glucose is bound at residue Gln161. The Extracellular portion of the chain corresponds to 177 to 185 (DSIMGNEDL). A helical transmembrane segment spans residues 186 to 206 (WPLLLSVIFVPALLQCIVLPL). The Cytoplasmic portion of the chain corresponds to 207-271 (CPESPRFLLI…LFRSPAYRQP (65 aa)). Ser226 is modified (phosphoserine). The helical transmembrane segment at 272-293 (ILSAVVLQLSQQLSGINAVFYY) threads the bilayer. Residues 282 to 283 (QQ) and Asn288 each bind D-glucose. Over 294 to 306 (STSIFEKAGVQQP) the chain is Extracellular. A helical membrane pass occupies residues 307–328 (VYATIGSGIVNTAFTVVSLFVV). A D-glucose-binding site is contributed by Asn317. Topologically, residues 329-334 (ERAGRR) are cytoplasmic. A helical transmembrane segment spans residues 335-355 (TLHLIGLAGMAACAVLMTIAL). Residues 356–365 (ALLEQLPWMS) are Extracellular-facing. Residues 366-388 (YLSIVAIFGFVAFFEVGPGPIPW) traverse the membrane as a helical segment. Glu380 and Trp388 together coordinate D-glucose. Residues 389-401 (FIVAELFSQGPRP) lie on the Cytoplasmic side of the membrane. The chain crosses the membrane as a helical span at residues 402-422 (AAVAVAGFSNWTSNFIVGMCF). The Extracellular segment spans residues 423–429 (QYVEQLC). A helical transmembrane segment spans residues 430-450 (GPYVFIIFTVLLVLFFIFTYF). At 451 to 492 (KVPETKGRTFDEIASGFRQGGASQSDKTPEELFHPLGADSQV) the chain is on the cytoplasmic side. Ser465 carries the phosphoserine modification. The disordered stretch occupies residues 468–492 (RQGGASQSDKTPEELFHPLGADSQV). Phosphothreonine is present on Thr478. The residue at position 490 (Ser490) is a Phosphoserine.

Belongs to the major facilitator superfamily. Sugar transporter (TC 2.A.1.1) family. Glucose transporter subfamily. Found in a complex with ADD2, DMTN and SLC2A1. Interacts (via C-terminus cytoplasmic region) with DMTN. Interacts with SNX27; the interaction is required when endocytosed to prevent degradation in lysosomes and promote recycling to the plasma membrane. Interacts with GIPC (via PDZ domain). Interacts with STOM. Interacts with SGTA (via Gln-rich region). Interacts with BSG. Interacts with SMIM43; the interaction may promote SLC2A1-mediated glucose transport to meet the energy needs of mesendoderm differentiation. Post-translationally, phosphorylation at Ser-226 by PKC promotes glucose uptake by increasing cell membrane localization.

The protein resides in the cell membrane. The protein localises to the photoreceptor inner segment. It carries out the reaction D-glucose(out) = D-glucose(in). With respect to regulation, the uptake of glucose is inhibited by cytochalasin B. Glucose uptake is increased in response to phorbol ester 12-O-tetradecanoylphorbol-13-acetate (TPA) treatment: TPA-induced glucose uptake requires phosphorylation at Ser-226. Its function is as follows. Facilitative glucose transporter, which is responsible for constitutive or basal glucose uptake. Has a very broad substrate specificity; can transport a wide range of aldoses including both pentoses and hexoses. Most important energy carrier of the brain: present at the blood-brain barrier and assures the energy-independent, facilitative transport of glucose into the brain. In association with BSG and NXNL1, promotes retinal cone survival by increasing glucose uptake into photoreceptors. Required for mesendoderm differentiation. This chain is Solute carrier family 2, facilitated glucose transporter member 1, found in Oryctolagus cuniculus (Rabbit).